Consider the following 197-residue polypeptide: Protein LURP-one-related 9 (197 aa).

This sequence belongs to the LOR family.

Might be related to the phospholipid scramblase and tubby-like superfamily of membrane tethered transcription factors. The polypeptide is Protein LURP-one-related 9 (Arabidopsis thaliana (Mouse-ear cress)).